Here is a 549-residue protein sequence, read N- to C-terminus: Formate--tetrahydrofolate ligase (549 aa).

60–67 (TPYGEGKT) serves as a coordination point for ATP.

Belongs to the formate--tetrahydrofolate ligase family.

It catalyses the reaction (6S)-5,6,7,8-tetrahydrofolate + formate + ATP = (6R)-10-formyltetrahydrofolate + ADP + phosphate. It functions in the pathway one-carbon metabolism; tetrahydrofolate interconversion. This is Formate--tetrahydrofolate ligase from Campylobacter concisus (strain 13826).